A 752-amino-acid chain; its full sequence is Iron-sulfur clusters transporter ABCB7, mitochondrial (752 aa).

A mitochondrion-targeting transit peptide spans 1-22 (MALLAIHSWRWAAAAVAFEKHK). Residues 23 to 140 (HSAVLTRSLV…KDRPDLRARV (118 aa)) are Mitochondrial matrix-facing. The ABC transmembrane type-1 domain occupies 140–436 (VAISLGFLGG…LGTVYRETRQ (297 aa)). Residues 141 to 161 (AISLGFLGGAKAMNIVVPFMF) form a helical membrane-spanning segment. At 162–185 (KYAVDSLNQMSGNMLNLSDAPNTV) the chain is on the mitochondrial intermembrane side. A helical transmembrane segment spans residues 186–206 (ATMATAVLIGYGVSRAGAAFF). Topologically, residues 207–259 (NEVRNAVFGKVAQNSIRRIAKNVFLHLHNLDLGFHLSRQTGALSKAIDRGTRG) are mitochondrial matrix. N6-acetyllysine occurs at positions 216 and 251. Residues 260–280 (ISFVLSALVFNLLPIVFEMTL) form a helical membrane-spanning segment. Residues 281–290 (VSSVLYYKCG) lie on the Mitochondrial intermembrane side of the membrane. Residues 291–311 (AQFALVTLGTLGAYTAFTVAV) traverse the membrane as a helical segment. Residues 312-382 (TRWRTRFRIE…TLAMLNFGQS (71 aa)) lie on the Mitochondrial matrix side of the membrane. Residue 315-319 (RTRFR) participates in glutathione binding. S336 bears the Phosphoserine mark. Y340 is subject to Phosphotyrosine. Residue T342 is modified to Phosphothreonine. K350 is subject to N6-acetyllysine. 378–381 (NFGQ) serves as a coordination point for glutathione. The helical transmembrane segment at 383-403 (AIFSVGLTAIMVLASQGIVAG) threads the bilayer. Topologically, residues 404–409 (ALTVGD) are mitochondrial intermembrane. A helical transmembrane segment spans residues 410 to 430 (LVMVNGLLFQLSLPLNFLGTV). G428 contacts glutathione. At 431 to 752 (YRETRQALID…SVKGCGNCSC (322 aa)) the chain is on the mitochondrial matrix side. The ABC transporter domain maps to 472-706 (VAFDNVHFEY…SSSIYSEMWH (235 aa)). ATP is bound by residues Y481 and 505–516 (GGSGSGKSTIVR).

Belongs to the ABC transporter superfamily. ABCB family. Heavy Metal importer (TC 3.A.1.210) subfamily. Homodimer or heterodimer. Interacts with C10orf88/PAAT. Forms a complex with ABCB10 and FECH, where a dimeric FECH bridges ABCB7 and ABCB10 homodimers; this complex may be required for cellular iron homeostasis, mitochondrial function and heme biosynthesis. Interacts with FECH. Interacts with ATP5F1A. Interacts with COX4I1; this interaction allows the regulation of cellular iron homeostasis and cellular reactive oxygen species (ROS) levels in cardiomyocytes.

Its subcellular location is the mitochondrion inner membrane. The catalysed reaction is (glutathione)4[2Fe(III)-2S] cluster(in) + ATP + H2O = (glutathione)4[2Fe(III)-2S] cluster(out) + ADP + phosphate + H(+). Functionally, exports glutathione-coordinated iron-sulfur clusters such as [2Fe-2S]-(GS)4 cluster from the mitochondria to the cytosol in an ATP-dependent manner allowing the assembly of the cytosolic iron-sulfur (Fe/S) cluster-containing proteins and participates in iron homeostasis. Moreover, through a functional complex formed of ABCB7, FECH and ABCB10, also plays a role in the cellular iron homeostasis, mitochondrial function and heme biosynthesis. In cardiomyocytes, regulates cellular iron homeostasis and cellular reactive oxygen species (ROS) levels through its interaction with COX4I1. May also play a role in hematopoiesis. This Rattus norvegicus (Rat) protein is Iron-sulfur clusters transporter ABCB7, mitochondrial.